The sequence spans 857 residues: Blue light receptor lreA (857 aa).

PAS domains are found at residues 306–328 (IIYVSEAFERLTGYTEQEIVGQN), 479–542 (LVEN…TTTD), and 608–642 (LSKSGIVLFMTSKARPVLGRMPDELIGKSLQDLMD). The segment at 811–836 (CAICQTKKTPEWRRGPSGERDLCNSC) adopts a GATA-type zinc-finger fold.

Transcription factor that acts as a blue light sensor. Plays crucial roles in fungal growth and asexual development. Involved in conidiophore formation, sclerotium production, and conidial stress tolerance. Promotes conidiation by inducing the expression of brlA and abaA. Positively regulates the fungal pathogenicity towards maize. In blue light conditions, inhibits aflatoxin B1 (AFB1) biosynthesis by down-regulating the expression of key genes such as aflA, aflJ, aflH, aflO and aflK. The polypeptide is Blue light receptor lreA (Aspergillus flavus).